Here is a 139-residue protein sequence, read N- to C-terminus: Large ribosomal subunit protein bL17 (139 aa).

It belongs to the bacterial ribosomal protein bL17 family. In terms of assembly, part of the 50S ribosomal subunit. Contacts protein L32.

The polypeptide is Large ribosomal subunit protein bL17 (Azorhizobium caulinodans (strain ATCC 43989 / DSM 5975 / JCM 20966 / LMG 6465 / NBRC 14845 / NCIMB 13405 / ORS 571)).